We begin with the raw amino-acid sequence, 808 residues long: Copal-8-ol diphosphate hydratase, chloroplastic (808 aa).

Residues 1 to 50 (MAFTFTSAHLFLPVTENHSVHVNYSIPPGNWRLWSTAKGGSNKLDIRRLR) constitute a chloroplast transit peptide. Residues 190–219 (DKCQKGLKFFRDNISKLEKENVEASAQMLS) are a coiled coil. Position 256 (lysine 256) interacts with substrate. Positions 391 and 393 each coordinate Mg(2+). A DXDD motif motif is present at residues 391–394 (DLDD). Lysine 477 serves as a coordination point for substrate.

It belongs to the terpene synthase family. The cofactor is Mg(2+). Expressed in stems, leaves and trichomes. Not detected in roots and seeds. Higher expression in young leaves than in fully expanded leaves.

The protein resides in the plastid. The protein localises to the chloroplast. The catalysed reaction is (2E,6E,10E)-geranylgeranyl diphosphate + H2O = 8-hydroxycopalyl diphosphate. It functions in the pathway secondary metabolite biosynthesis; terpenoid biosynthesis. Functionally, involved in the biosynthesis of oxygen-containing labdane-type diterpenes that may be implicated in direct and indirect defense mechanisms. No activity with geranyl diphosphate or farnesyl diphosphate as substrate. The protein is Copal-8-ol diphosphate hydratase, chloroplastic of Cistus creticus subsp. creticus (Rock rose).